A 245-amino-acid polypeptide reads, in one-letter code: Exosome complex component RRP41 (245 aa).

Ala2 is modified (N-acetylalanine).

Belongs to the RNase PH family. As to quaternary structure, component of the RNA exosome core complex (Exo-9), composed of EXOSC1, EXOSC2, EXOSC3, EXOSC4, EXOSC5, EXOSC6, EXOSC7, EXOSC8 and EXOSC9; within the complex interacts with EXOSC2, EXOSC7 and EXOSC9. The catalytically inactive RNA exosome core complex (Exo-9) associates with the catalytic subunit EXOSC10/RRP6. Exo-9 may associate with DIS3 to form the nucleolar exosome complex, or DIS3L to form the cytoplasmic exosome complex. Exo-9 is formed by a hexameric base ring consisting of the heterodimers EXOSC4-EXOSC9, EXOSC5-EXOSC8 and EXOSC6-EXOSC7, and a cap ring consisting of EXOSC1, EXOSC2 and EXOSC3. The RNA exosome complex associates with cofactors C1D/RRP47, MPHOSPH6/MPP6 and MTREX/MTR4. Interacts with DDX60. Interacts with DIS3; the interaction is direct.

It localises to the cytoplasm. Its subcellular location is the nucleus. It is found in the nucleolus. The protein localises to the nucleoplasm. Non-catalytic component of the RNA exosome complex which has 3'-&gt;5' exoribonuclease activity and participates in a multitude of cellular RNA processing and degradation events. In the nucleus, the RNA exosome complex is involved in proper maturation of stable RNA species such as rRNA, snRNA and snoRNA, in the elimination of RNA processing by-products and non-coding 'pervasive' transcripts, such as antisense RNA species and promoter-upstream transcripts (PROMPTs), and of mRNAs with processing defects, thereby limiting or excluding their export to the cytoplasm. The RNA exosome may be involved in Ig class switch recombination (CSR) and/or Ig variable region somatic hypermutation (SHM) by targeting AICDA deamination activity to transcribed dsDNA substrates. In the cytoplasm, the RNA exosome complex is involved in general mRNA turnover and specifically degrades inherently unstable mRNAs containing AU-rich elements (AREs) within their 3' untranslated regions, and in RNA surveillance pathways, preventing translation of aberrant mRNAs. It seems to be involved in degradation of histone mRNA. The catalytic inactive RNA exosome core complex of 9 subunits (Exo-9) is proposed to play a pivotal role in the binding and presentation of RNA for ribonucleolysis, and to serve as a scaffold for the association with catalytic subunits and accessory proteins or complexes. EXOSC4 binds to ARE-containing RNAs. The sequence is that of Exosome complex component RRP41 (EXOSC4) from Homo sapiens (Human).